The sequence spans 91 residues: CRISPR-associated endoribonuclease Cas2 (91 aa).

Mg(2+) is bound at residue aspartate 14.

Belongs to the CRISPR-associated endoribonuclease Cas2 protein family. As to quaternary structure, homodimer, forms a heterotetramer with a Cas1 homodimer. Mg(2+) serves as cofactor.

Functionally, CRISPR (clustered regularly interspaced short palindromic repeat), is an adaptive immune system that provides protection against mobile genetic elements (viruses, transposable elements and conjugative plasmids). CRISPR clusters contain sequences complementary to antecedent mobile elements and target invading nucleic acids. CRISPR clusters are transcribed and processed into CRISPR RNA (crRNA). Functions as a ssRNA-specific endoribonuclease. Involved in the integration of spacer DNA into the CRISPR cassette. The chain is CRISPR-associated endoribonuclease Cas2 from Nanoarchaeum equitans (strain Kin4-M).